Here is a 1000-residue protein sequence, read N- to C-terminus: Bifunctional glutamine synthetase adenylyltransferase/adenylyl-removing enzyme (1000 aa).

The segment at 1–481 (MTAPGRRSST…LHEKLFYRPL (481 aa)) is adenylyl removase. Positions 487 to 1000 (QLAPGEARLS…AVVDEQFYGA (514 aa)) are adenylyl transferase.

The protein belongs to the GlnE family. It depends on Mg(2+) as a cofactor.

The catalysed reaction is [glutamine synthetase]-O(4)-(5'-adenylyl)-L-tyrosine + phosphate = [glutamine synthetase]-L-tyrosine + ADP. The enzyme catalyses [glutamine synthetase]-L-tyrosine + ATP = [glutamine synthetase]-O(4)-(5'-adenylyl)-L-tyrosine + diphosphate. Functionally, involved in the regulation of glutamine synthetase GlnA, a key enzyme in the process to assimilate ammonia. When cellular nitrogen levels are high, the C-terminal adenylyl transferase (AT) inactivates GlnA by covalent transfer of an adenylyl group from ATP to specific tyrosine residue of GlnA, thus reducing its activity. Conversely, when nitrogen levels are low, the N-terminal adenylyl removase (AR) activates GlnA by removing the adenylyl group by phosphorolysis, increasing its activity. The regulatory region of GlnE binds the signal transduction protein PII (GlnB) which indicates the nitrogen status of the cell. In Streptomyces avermitilis (strain ATCC 31267 / DSM 46492 / JCM 5070 / NBRC 14893 / NCIMB 12804 / NRRL 8165 / MA-4680), this protein is Bifunctional glutamine synthetase adenylyltransferase/adenylyl-removing enzyme.